A 295-amino-acid chain; its full sequence is Hepatic leukemia factor (295 aa).

Basic and acidic residues predominate over residues L34–D52. Disordered stretches follow at residues L34–L69 and S93–T160. A bZIP domain is found at D225–Y288. The segment at K227–R247 is basic motif. The leucine-zipper stretch occupies residues L248–I255.

The protein belongs to the bZIP family. PAR subfamily. Binds DNA specifically as homodimer or heterodimer with other PAR factors. Isoform HLF43 is abundant in brain, liver and kidney. Isoform HLF36 is expressed only in the liver. Both isoforms accumulate in the liver with different circadian amplitudes. Isoform HLF36 reaches peak expression levels between 8 and 12 p.m. Isoform HLF43 displays a more pronounced fluctuation through the day.

The protein localises to the nucleus. The protein is Hepatic leukemia factor (Hlf) of Rattus norvegicus (Rat).